Consider the following 335-residue polypeptide: Nucleoid-associated protein PputGB1_0980 (335 aa).

Belongs to the YejK family.

The protein localises to the cytoplasm. It is found in the nucleoid. The protein is Nucleoid-associated protein PputGB1_0980 of Pseudomonas putida (strain GB-1).